We begin with the raw amino-acid sequence, 341 residues long: Protein FAM50A (341 aa).

Disordered regions lie at residues 1–27 and 80–147; these read MAQY…EREQ and LVKE…EIEE. The span at 80–115 shows a compositional bias: basic and acidic residues; that stretch reads LVKEREKQLAKKEQSKELQLKLEKQKEKKRKEEQKR. The span at 125–147 shows a compositional bias: acidic residues; that stretch reads DEGEDEEEEEEEEEEEEEDEIEE.

This sequence belongs to the FAM50 family.

It localises to the nucleus. Functionally, probably involved in the regulation of pre-mRNA splicing. This chain is Protein FAM50A (fam50a), found in Danio rerio (Zebrafish).